A 1176-amino-acid polypeptide reads, in one-letter code: DNA-directed RNA polymerase subunit beta (1176 aa).

Polar residues predominate over residues 13–30 (TDASLHQGRPQSSSNSSV). The tract at residues 13-35 (TDASLHQGRPQSSSNSSVPGAPN) is disordered.

It belongs to the RNA polymerase beta chain family. The RNAP catalytic core consists of 2 alpha, 1 beta, 1 beta' and 1 omega subunit. When a sigma factor is associated with the core the holoenzyme is formed, which can initiate transcription.

The enzyme catalyses RNA(n) + a ribonucleoside 5'-triphosphate = RNA(n+1) + diphosphate. Its function is as follows. DNA-dependent RNA polymerase catalyzes the transcription of DNA into RNA using the four ribonucleoside triphosphates as substrates. This is DNA-directed RNA polymerase subunit beta from Mycobacterium ulcerans (strain Agy99).